A 366-amino-acid chain; its full sequence is S-adenosylmethionine synthase 1 (366 aa).

A K(+)-binding site is contributed by E18. Residues E31 and Q74 each coordinate L-methionine. ATP contacts are provided by residues 142 to 144 (DGN), 210 to 213 (SGRF), D221, 227 to 228 (RK), A244, K248, and K252. D221 serves as a coordination point for L-methionine. Position 252 (K252) interacts with L-methionine.

This sequence belongs to the AdoMet synthase family. As to quaternary structure, homotetramer. Mn(2+) is required as a cofactor. Mg(2+) serves as cofactor. The cofactor is Co(2+). Requires K(+) as cofactor.

The protein resides in the cytoplasm. It carries out the reaction L-methionine + ATP + H2O = S-adenosyl-L-methionine + phosphate + diphosphate. It functions in the pathway amino-acid biosynthesis; S-adenosyl-L-methionine biosynthesis; S-adenosyl-L-methionine from L-methionine: step 1/1. In terms of biological role, catalyzes the formation of S-adenosylmethionine from methionine and ATP. The reaction comprises two steps that are both catalyzed by the same enzyme: formation of S-adenosylmethionine (AdoMet) and triphosphate, and subsequent hydrolysis of the triphosphate. This Pisum sativum (Garden pea) protein is S-adenosylmethionine synthase 1 (SAMS1).